The sequence spans 152 residues: Maintenance of carboxysome distribution protein B (152 aa).

In terms of assembly, self-associates, interacts with McdA probably via the C-terminus of both proteins. Homohexamerizes. Probably a trimer of dimers. Interacts with most of the shell components of the carboxysome (CcmK2, CcmK3, CcmK4, CcmL and CcmO, but not CcmP) via its C-terminus.

It is found in the carboxysome. Its function is as follows. McdA and McdB together mediate carboxysome (Cb) spacing, size, ultrastructure and probably inheritance in the cell. Together they prevent Cb aggregation. McdA is an ATPase that forms dynamic gradients on the nucleoid in response to adapter protein McdB, which associates with carboxysomes. The interplay between McdA gradients on the nucleoid and McdB-bound carboxysomes result in the equal spacing of Cbs along the cell length. McdB may have an additional function in cell divison. Stimulates the ATPase activity of McdA, causing McdA to be released from DNA. Overexpression leads to loss of McdA oscillation and formation of large Cb aggregates which colocalize with McdB, as well as diffuse McdB staining in the cytoplasm. Undergoes liquid-liquid phase separation between pH 6.5-7.5 and at concentrations between 1 uM and 167 uM. Forms polar foci upon overexpression in E.coli. In terms of biological role, incorrect positioning (aggregation) of carboxysomes results in reduced CO(2) fixation by encapsulated RuBisCO, which leads to slower growth, cell elongation, asymmetric cell division and an increase in RuBisCO levels. This chain is Maintenance of carboxysome distribution protein B, found in Synechococcus elongatus (strain ATCC 33912 / PCC 7942 / FACHB-805) (Anacystis nidulans R2).